Consider the following 165-residue polypeptide: Methyl-coenzyme M reductase II operon protein D (165 aa).

As to quaternary structure, MCR is composed of three subunits: alpha, beta, and gamma. The function of protein D is not known.

The chain is Methyl-coenzyme M reductase II operon protein D (mrtD) from Methanothermus fervidus (strain ATCC 43054 / DSM 2088 / JCM 10308 / V24 S).